The primary structure comprises 367 residues: BTB/POZ domain-containing protein Tiwaz (367 aa).

2 disordered regions span residues Leu-16 to Leu-46 and Ser-62 to Thr-87. Positions Cys-28 to Asp-45 are enriched in basic and acidic residues. One can recognise a BTB domain in the interval Ala-135–Glu-205. Residues Gly-240–Ser-261 are disordered.

In terms of biological role, functions with the transcription factor TfAP-2 to regulate octopamine neuronal signaling pathways that control behaviors such as male aggression, male mating, and the initiation of feeding. Required for TfAP-2 transcriptional activity in octopaminergic neurons. Functions with TfAP-2 to regulate expression of genes which are involved in promoting octopamine production and secretion from octopaminergic neurons, such as Tbh and Vmat. Octopamine then modulates feeding and male aggression by regulating the expression of the satiation hormone Dsk in insulin-producing cells (IPCs). Functions with octopamine and Dsk as part of a negative feedback loop to prevent overeating; acts with TfAP-2 to regulate octopamine signaling pathways that initiate feeding, then octopamine activates expression of Dsk which inhibits consummatory behavior. May also be involved in negatively regulating nociception in larvae to prevent spontaneous pain and hyperalgesia. The chain is BTB/POZ domain-containing protein Tiwaz from Drosophila melanogaster (Fruit fly).